The sequence spans 295 residues: ATP synthase gamma chain (295 aa).

Belongs to the ATPase gamma chain family. In terms of assembly, F-type ATPases have 2 components, CF(1) - the catalytic core - and CF(0) - the membrane proton channel. CF(1) has five subunits: alpha(3), beta(3), gamma(1), delta(1), epsilon(1). CF(0) has three main subunits: a, b and c.

Its subcellular location is the cell inner membrane. Its function is as follows. Produces ATP from ADP in the presence of a proton gradient across the membrane. The gamma chain is believed to be important in regulating ATPase activity and the flow of protons through the CF(0) complex. This is ATP synthase gamma chain from Cytophaga hutchinsonii (strain ATCC 33406 / DSM 1761 / CIP 103989 / NBRC 15051 / NCIMB 9469 / D465).